A 344-amino-acid chain; its full sequence is Arginine N-succinyltransferase (344 aa).

Leucine 125 is a binding site for succinyl-CoA. The active-site Proton donor is histidine 229.

It belongs to the arginine N-succinyltransferase family.

It catalyses the reaction succinyl-CoA + L-arginine = N(2)-succinyl-L-arginine + CoA + H(+). It functions in the pathway amino-acid degradation; L-arginine degradation via AST pathway; L-glutamate and succinate from L-arginine: step 1/5. Catalyzes the transfer of succinyl-CoA to arginine to produce N(2)-succinylarginine. This Escherichia coli (strain 55989 / EAEC) protein is Arginine N-succinyltransferase.